Here is a 277-residue protein sequence, read N- to C-terminus: MISSIKPVLPSLTAIVGIGIYFAIWWALNGVFNNYNKKVLNAFPYLWLTLTLSLACGSLMMLVSWVALAHTIGHVEAIVSMSKVVVSFTHTSSKAVRQPLASLSQASSWARCALAAVMELNFNMIGFMGAMISNLAFVFRNIFSKKGMKGKSVSVMNYYACLSMMSLLIVTPFANSVEGPQMWADGWQNDVSKSDQTLSSKWVVAHSVFYHLYNQVSYIPRCLNHHLPNPLKHVNALGAAIAILGTFIYSQIKNRVKKNHILLVLCLGMLEPLVITL.

The next 5 membrane-spanning stretches (helical) occupy residues 8–28, 46–66, 124–143, 153–173, and 230–250; these read VLPS…WWAL, LWLT…VSWV, MIGF…RNIF, VSVM…VTPF, and PLKH…FIYS.

Belongs to the TPT transporter family. GPT (TC 2.A.7.9) subfamily.

It is found in the membrane. This is Putative glucose-6-phosphate/phosphate-translocator-like protein 1 from Arabidopsis thaliana (Mouse-ear cress).